Here is a 350-residue protein sequence, read N- to C-terminus: Tetraacyldisaccharide 4'-kinase (350 aa).

48 to 55 (SAGGTGKT) contacts ATP.

This sequence belongs to the LpxK family.

It carries out the reaction a lipid A disaccharide + ATP = a lipid IVA + ADP + H(+). Its pathway is glycolipid biosynthesis; lipid IV(A) biosynthesis; lipid IV(A) from (3R)-3-hydroxytetradecanoyl-[acyl-carrier-protein] and UDP-N-acetyl-alpha-D-glucosamine: step 6/6. In terms of biological role, transfers the gamma-phosphate of ATP to the 4'-position of a tetraacyldisaccharide 1-phosphate intermediate (termed DS-1-P) to form tetraacyldisaccharide 1,4'-bis-phosphate (lipid IVA). The polypeptide is Tetraacyldisaccharide 4'-kinase (Chlorobium limicola (strain DSM 245 / NBRC 103803 / 6330)).